Here is a 201-residue protein sequence, read N- to C-terminus: Female-specific protein transformer (201 aa).

Residues 1–117 (MDADSSSRSP…RSRSRSRTPR (117 aa)) form a disordered region. Residues 9-37 (SPRDTRTCARPKEKVPYFADEGRERDRVR) are compositionally biased toward basic and acidic residues. 2 stretches are compositionally biased toward basic residues: residues 38-62 (NLRHRKTSITRPTTSHRGRPMRARS) and 99-115 (KQRRRRSRSRSRSRSRT).

It is found in the nucleus speckle. Its function is as follows. Member of the regulatory pathway controlling female somatic sexual differentiation, regulated by Sxl. Activates dsx female-specific splicing by promoting the formation of a splicing enhancer complex which consists of tra, tra2 and sr proteins. The protein is Female-specific protein transformer (tra) of Drosophila hydei (Fruit fly).